The primary structure comprises 507 residues: Maturase K (507 aa).

It belongs to the intron maturase 2 family. MatK subfamily.

Its subcellular location is the plastid. The protein localises to the chloroplast. Its function is as follows. Usually encoded in the trnK tRNA gene intron. Probably assists in splicing its own and other chloroplast group II introns. The polypeptide is Maturase K (Craterostigma plantagineum (Blue gem)).